Reading from the N-terminus, the 85-residue chain is Putative transmembrane protein ORF85 (85 aa).

A run of 2 helical transmembrane segments spans residues 12–32 (FPPTTLIVLALGSAIAYKFLS) and 44–64 (LGIILVFLGHGGVISTIGAGI).

It is found in the host membrane. The protein is Putative transmembrane protein ORF85 of Acidianus convivator (ABV).